Reading from the N-terminus, the 388-residue chain is Mannitol-1-phosphate 5-dehydrogenase (388 aa).

Ala5–Gly16 provides a ligand contact to NAD(+). The active site involves Lys213.

It belongs to the mannitol dehydrogenase family. Monomer.

The catalysed reaction is D-mannitol 1-phosphate + NAD(+) = beta-D-fructose 6-phosphate + NADH + H(+). Functionally, catalyzes the NAD(H)-dependent interconversion of D-fructose 6-phosphate and D-mannitol 1-phosphate in the mannitol metabolic pathway. This is Mannitol-1-phosphate 5-dehydrogenase (mpdA) from Aspergillus clavatus (strain ATCC 1007 / CBS 513.65 / DSM 816 / NCTC 3887 / NRRL 1 / QM 1276 / 107).